Here is a 432-residue protein sequence, read N- to C-terminus: 3-phosphoshikimate 1-carboxyvinyltransferase (432 aa).

Positions 23, 24, and 28 each coordinate 3-phosphoshikimate. Residue Lys-23 participates in phosphoenolpyruvate binding. Phosphoenolpyruvate-binding residues include Gly-95 and Arg-123. Ser-167, Gln-169, Asp-317, and Lys-344 together coordinate 3-phosphoshikimate. Gln-169 lines the phosphoenolpyruvate pocket. Asp-317 functions as the Proton acceptor in the catalytic mechanism. Residues Arg-348 and Arg-390 each contribute to the phosphoenolpyruvate site.

This sequence belongs to the EPSP synthase family. In terms of assembly, monomer.

Its subcellular location is the cytoplasm. It catalyses the reaction 3-phosphoshikimate + phosphoenolpyruvate = 5-O-(1-carboxyvinyl)-3-phosphoshikimate + phosphate. The protein operates within metabolic intermediate biosynthesis; chorismate biosynthesis; chorismate from D-erythrose 4-phosphate and phosphoenolpyruvate: step 6/7. Catalyzes the transfer of the enolpyruvyl moiety of phosphoenolpyruvate (PEP) to the 5-hydroxyl of shikimate-3-phosphate (S3P) to produce enolpyruvyl shikimate-3-phosphate and inorganic phosphate. This chain is 3-phosphoshikimate 1-carboxyvinyltransferase, found in Staphylococcus haemolyticus (strain JCSC1435).